The following is a 104-amino-acid chain: Cell division topological specificity factor (104 aa).

This sequence belongs to the MinE family.

In terms of biological role, prevents the cell division inhibition by proteins MinC and MinD at internal division sites while permitting inhibition at polar sites. This ensures cell division at the proper site by restricting the formation of a division septum at the midpoint of the long axis of the cell. The protein is Cell division topological specificity factor of Sorangium cellulosum (strain So ce56) (Polyangium cellulosum (strain So ce56)).